The following is a 232-amino-acid chain: Small ribosomal subunit protein uS3 (232 aa).

In terms of domain architecture, KH type-2 spans 39–107; the sequence is IRAFLKKKLY…EVNVNIKEER (69 aa). A disordered region spans residues 211–232; sequence GVQPEKTEEEAPKKTRRARRGK. Over residues 213-223 the composition is skewed to basic and acidic residues; that stretch reads QPEKTEEEAPK.

The protein belongs to the universal ribosomal protein uS3 family. As to quaternary structure, part of the 30S ribosomal subunit. Forms a tight complex with proteins S10 and S14.

Its function is as follows. Binds the lower part of the 30S subunit head. Binds mRNA in the 70S ribosome, positioning it for translation. This is Small ribosomal subunit protein uS3 from Campylobacter concisus (strain 13826).